The sequence spans 274 residues: Glutamate--cysteine ligase regulatory subunit (274 aa).

At Ser-59 the chain carries Phosphoserine. Lys-263 carries the N6-acetyllysine modification.

Belongs to the aldo/keto reductase family. Glutamate--cysteine ligase light chain subfamily. As to quaternary structure, heterodimer of a catalytic heavy chain and a regulatory light chain.

It functions in the pathway sulfur metabolism; glutathione biosynthesis; glutathione from L-cysteine and L-glutamate: step 1/2. The sequence is that of Glutamate--cysteine ligase regulatory subunit (Gclm) from Mus musculus (Mouse).